An 822-amino-acid chain; its full sequence is MEASGGVGGAFLKDVVAYVEVWSSKGTENYSRTFAKQLEDMGATVSKTLNKQVTHVIFKDGYQSTWDKAQKTGAKLVSVLWVEKCRMAGALVDESLFPAVNTDEHLPNLSRKKHKCMQPKDFILKTPENDKRLQKKFEKMAEELQRQKAALDDDVPVLLFESPRSLVYSSPVNVMKRRLQDMKEKRENLSPTSSQMLEQSQQNPCVSLFETSLNISHQPLSSDESFASGSHSSFGDSCGDQERKLGRSANEMTTVTCPSSPVLRASSFYGSASPNHLRQPRPQKAPDSPSKESINCQKDATGAVADSERKQAAGVSQGVPDEKLCLSPTMSIIEEHQVRLGPKNSSAKRKRAADLGSSPKGKLKKRYKRKSALAIQLFKSDQSPPSTIRLIPGTPDVEASSYEDYFSPDNLKERNSERLPPEAQQLASPSLFHCRGLSKWERRNMLEMCDFTCIGEKHRSISSISDLISKSASSLEKPVKEEVNTASTCLLLVETSANDSPGLCSQPGPQLRDDTGPEGSSHPDTLSSSAHHITPLKGNSTETRDPGDGKGSPKEGSTPPASASPEDEVHICNLSLGEDCNVEKSVEEKENIATGYSESVKNGPGRPDPSDSSCTGLVRPQQKPKKSEKEEKPTRTLVMTSMPSEKQTLIIQVVSTLKGFSFAPEVCETTTHVLVGKSARTLNVLMGIARGCWILSYEWVLLSLELGHWISEEPFELSETFPAAPICRLERHLSTQQYQGTLFANQPKMFIAPASSPPRAKLCELVLLCGGQVSPAPQLASLIIGPYKGKKKARIQYLSEKWVLDSITQHKICDFNNYQLLQ.

In terms of domain architecture, BRCT 1 spans 10–99; sequence AFLKDVVAYV…ALVDESLFPA (90 aa). 3 disordered regions span residues 182–203, 219–243, and 266–295; these read MKEK…SQQN, PLSS…DQER, and SSFY…ESIN. Polar residues-rich tracts occupy residues 189 to 203 and 219 to 235; these read LSPT…SQQN and PLSS…SSFG. 3 positions are modified to phosphoserine: S273, S290, and S327. At T329 the chain carries Phosphothreonine. Disordered stretches follow at residues 335–366, 498–567, and 594–636; these read EHQV…LKKR, NDSP…SPED, and TGYS…PTRT. The span at 522 to 541 shows a compositional bias: polar residues; that stretch reads HPDTLSSSAHHITPLKGNST. 2 stretches are compositionally biased toward basic and acidic residues: residues 542–553 and 625–634; these read ETRDPGDGKGSP and KKSEKEEKPT. BRCT domains are found at residues 627–717 and 738–820; these read SEKE…PFEL and YQGT…NYQL.

In terms of assembly, interacts with CDC27 and maybe other components of the APC/C complex. Interacts with histone variant H2AX under DNA damage conditions. In terms of tissue distribution, high levels of expression are found in the developing forebrain and, in particular, in the walls of the lateral ventricles.

The protein resides in the cytoplasm. It localises to the cytoskeleton. The protein localises to the microtubule organizing center. It is found in the centrosome. Functionally, implicated in chromosome condensation and DNA damage induced cellular responses. May play a role in neurogenesis and regulation of the size of the cerebral cortex. In Mus musculus (Mouse), this protein is Microcephalin.